The following is an 878-amino-acid chain: Aconitase htyD (878 aa).

Substrate-binding positions include Gln173 and 290–292 (DSH). 3 residues coordinate [4Fe-4S] cluster: Cys472, Cys535, and Cys538. Residues Arg558 and Arg563 each contribute to the substrate site. A disordered region spans residues 626-671 (IAIANQRTKPAPTMPAYVEPYRSFQPPVPPSSDQPQSMKDHGKTSN). Residue 742 to 743 (SR) participates in substrate binding.

This sequence belongs to the aconitase/IPM isomerase family.

The protein operates within antifungal biosynthesis. In terms of biological role, aconitase; part of the gene cluster that mediates the de novo generation of L-homotyrosine from acetyl-CoA and 4-hydroxyphenyl-pyruvate. L-homotyrosine is a building block of echinocandin B, a fungal lipidated cyclic hexapeptide that acts as an antifungal agent. L-homotyrosine 4-hydroxyphenyl-pyruvate first undergoes an aldol-type condensation by htyA with the C-2 of acetyl-CoA followed by the release of CoA to form 2-(4-hydroxybenzyl)-malate. This is followed by isomerization of 2-(4-hydroxy-benzyl)-malate to 3-(4-hydroxybenzyl)-malate by htyD. Thereafter, 3-(4-hydroxybenzyl)-malate undergoes decarboxylation and oxidation to form 2-oxo-4-(4-hydroxybenzyl)butanoic acid, coupled to reduction of NAD(+) to NADH by htyC. The product then undergoes transamination catalyzed by htyB to form L-homotyrosine. The protein is Aconitase htyD of Aspergillus rugulosus (Emericella rugulosa).